We begin with the raw amino-acid sequence, 406 residues long: Type IV pilus assembly protein PilC (406 aa).

A run of 4 helical transmembrane segments spans residues 69–91 (IFSRQLATMLGAGLTLLQALAIL), 171–191 (YPVIVFVFAVGVAYFLLTGIV), 211–231 (FLIAVSDLLRAATLPLLLLAV), and 377–397 (MIIFLGVIVGMIVAGMFLPLF).

This sequence belongs to the GSP F family. In terms of assembly, homotetramer. Interacts with PilB.

It localises to the cell inner membrane. Functionally, essential inner membrane component of the type IV pilus (T4P) that plays a role in surface and host cell adhesion, colonization, biofilm maturation, virulence, and twitching, a form of surface-associated motility facilitated by cycles of extension, adhesion, and retraction of T4P fibers. Controls both pilus assembly and disassembly and plays an important role in PilB localization to the complex and ATPase activity. In Thermus thermophilus (strain ATCC 27634 / DSM 579 / HB8), this protein is Type IV pilus assembly protein PilC.